Here is a 217-residue protein sequence, read N- to C-terminus: MAETASTETTPAAPPAEPKQKKKKQQPKKAAGGAKAKKPSGPSASELIVKSVSASKERGGVSLAALKKALAAGGYDVERNNSRLKLALKALVTKGTLTQVKGSGASGSFKLNKKQLETKVKAVAKKKLVAPKAKKPVTAKKKPKSPKKPKKVSAAAAKSPKKAKKPVKAAKSPKKPKAVKSKKVTKSPAKKATKPKAAKAKIAKAKAAKGKKAAAKK.

Composition is skewed to low complexity over residues 1–11 (MAETASTETTP) and 28–45 (KKAAGGAKAKKPSGPSAS). 2 disordered regions span residues 1-45 (MAET…PSAS) and 123-217 (VAKK…AAKK). Positions 40-113 (SGPSASELIV…GASGSFKLNK (74 aa)) constitute an H15 domain. Basic residues-rich tracts occupy residues 123 to 151 (VAKKKLVAPKAKKPVTAKKKPKSPKKPKK) and 159 to 217 (SPKK…AAKK).

The protein belongs to the histone H1/H5 family.

Its subcellular location is the nucleus. The protein localises to the chromosome. In terms of biological role, histones H1 are necessary for the condensation of nucleosome chains into higher-order structures. The sequence is that of Histone H1C from Xenopus laevis (African clawed frog).